The chain runs to 376 residues: Copper-containing nitrite reductase (376 aa).

A signal peptide (tat-type signal) is located at residues 1 to 33 (MSEQFQMTRRSMLAGAAIAGAVTPLIGAVSAHA). 2 consecutive Plastocyanin-like domains span residues 98–193 (MTFN…IMVL) and 258–359 (GAVG…FAVT). Positions 131, 136, 171, 172, 181, 186, and 342 each coordinate Cu cation.

Belongs to the multicopper oxidase family. As to quaternary structure, homotrimer. Cu(2+) is required as a cofactor. Requires Cu(+) as cofactor. FAD serves as cofactor. Predicted to be exported by the Tat system. The position of the signal peptide cleavage has not been experimentally proven.

It localises to the periplasm. It catalyses the reaction nitric oxide + Fe(III)-[cytochrome c] + H2O = Fe(II)-[cytochrome c] + nitrite + 2 H(+). The protein operates within nitrogen metabolism; nitrate reduction (denitrification); dinitrogen from nitrate: step 2/4. This Rhizobium meliloti (strain 1021) (Ensifer meliloti) protein is Copper-containing nitrite reductase (nirK).